A 512-amino-acid chain; its full sequence is UDP-N-acetylglucosamine--peptide N-acetylglucosaminyltransferase GtfA subunit (512 aa).

UDP is bound at residue 16–19 (GVEY). N-acetyl-D-glucosamine is bound at residue histidine 251. UDP is bound by residues 393–394 (QH) and 413–416 (EGFG).

Belongs to the glycosyltransferase group 1 family. Glycosyltransferase 4 subfamily. In terms of assembly, forms a heterotetramer with 2 subunits each of GtfA and GtfB. Part of the accessory SecA2/SecY2 protein translocation apparatus.

The protein resides in the cytoplasm. It is found in the cell membrane. It carries out the reaction L-seryl-[protein] + UDP-N-acetyl-alpha-D-glucosamine = 3-O-[N-acetyl-alpha-D-glucosaminyl]-L-seryl-[protein] + UDP + H(+). It functions in the pathway protein modification; protein glycosylation. Its function is as follows. Required for polymorphic O-glycosylation of the serine-rich repeat protein (SRRP) in this bacteria. Catalyzes the first step in glycosylation by transferring N-acetylglucosamine from UDP-GlcNAc to serine residues in the substrate protein. Part of the accessory SecA2/SecY2 system specifically required to export serine-rich repeat cell wall proteins encoded in the same operon. The GtfA-GtfB complex adds GlcNAc from UDP-GlcNAc to SRRP (experimentally characterized with a truncated SSR1 construct); the alpha linkage was shown for this enzyme but not the residues glycosylated on SRRP. This chain is UDP-N-acetylglucosamine--peptide N-acetylglucosaminyltransferase GtfA subunit, found in Limosilactobacillus reuteri subsp. suis (strain ATCC 53608 / LMG 31752 / 1063) (Lactobacillus reuteri).